The chain runs to 803 residues: Leucine--tRNA ligase (803 aa).

Residues 40–51 carry the 'HIGH' region motif; the sequence is PYPSGAGLHVGH. Positions 575-579 match the 'KMSKS' region motif; sequence KMSKS. K578 contributes to the ATP binding site.

This sequence belongs to the class-I aminoacyl-tRNA synthetase family.

It is found in the cytoplasm. The enzyme catalyses tRNA(Leu) + L-leucine + ATP = L-leucyl-tRNA(Leu) + AMP + diphosphate. The chain is Leucine--tRNA ligase from Listeria monocytogenes serotype 4b (strain F2365).